Reading from the N-terminus, the 266-residue chain is Nitrate import ATP-binding protein NrtD (266 aa).

The ABC transporter domain occupies 3–234; sequence LEITDLNRVF…DEETPKNRTY (232 aa). 39–46 provides a ligand contact to ATP; sequence GASGSGKS.

It belongs to the ABC transporter superfamily. Nitrate/nitrite/cyanate uptake transporter (NitT) (TC 3.A.1.16) family. As to quaternary structure, the complex is composed of two ATP-binding proteins (NrtC and NrtD), two transmembrane proteins (NrtB) and a solute-binding protein (NrtA).

The protein resides in the cell inner membrane. The catalysed reaction is nitrate(out) + ATP + H2O = nitrate(in) + ADP + phosphate + H(+). Its function is as follows. Part of the ABC transporter complex NrtABCD involved in nitrate uptake. The complex is probably also involved in nitrite transport. Probably responsible for energy coupling to the transport system. The chain is Nitrate import ATP-binding protein NrtD (nrtD) from Synechocystis sp. (strain ATCC 27184 / PCC 6803 / Kazusa).